The primary structure comprises 360 residues: Phenylalanine--tRNA ligase alpha subunit (360 aa).

E260 is a binding site for Mg(2+).

The protein belongs to the class-II aminoacyl-tRNA synthetase family. Phe-tRNA synthetase alpha subunit type 1 subfamily. In terms of assembly, tetramer of two alpha and two beta subunits. Mg(2+) is required as a cofactor.

The protein localises to the cytoplasm. The enzyme catalyses tRNA(Phe) + L-phenylalanine + ATP = L-phenylalanyl-tRNA(Phe) + AMP + diphosphate + H(+). In Rhodopseudomonas palustris (strain ATCC BAA-98 / CGA009), this protein is Phenylalanine--tRNA ligase alpha subunit.